The primary structure comprises 256 residues: MNDQRKGSDAEPTTHFGYKNVPESQKAEKVAEVFHSVAAKYDLMNDLLSGGMHRLWKRFAIELSGVRTGNRVLDIAGGTGDLTRKFSNLVGPTGQVVLADINASMLKVGRDRLLDLGVSGNVEFVQADAEKLPFPDNHFDCVTIAFGLRNVTHKEDALRSMLRVLKPGGRLLVLEFSKPTNKLMSKAYDAYSFAFMPLMGKLVTNDSESYRYLAESIRMHPNQETLKSMMVDAGFDRVTYHNMTAGVVALHRGIKP.

S-adenosyl-L-methionine-binding positions include T79, D100, and 128–129 (DA).

Belongs to the class I-like SAM-binding methyltransferase superfamily. MenG/UbiE family.

The enzyme catalyses a 2-demethylmenaquinol + S-adenosyl-L-methionine = a menaquinol + S-adenosyl-L-homocysteine + H(+). It carries out the reaction a 2-methoxy-6-(all-trans-polyprenyl)benzene-1,4-diol + S-adenosyl-L-methionine = a 5-methoxy-2-methyl-3-(all-trans-polyprenyl)benzene-1,4-diol + S-adenosyl-L-homocysteine + H(+). It functions in the pathway quinol/quinone metabolism; menaquinone biosynthesis; menaquinol from 1,4-dihydroxy-2-naphthoate: step 2/2. Its pathway is cofactor biosynthesis; ubiquinone biosynthesis. Its function is as follows. Methyltransferase required for the conversion of demethylmenaquinol (DMKH2) to menaquinol (MKH2) and the conversion of 2-polyprenyl-6-methoxy-1,4-benzoquinol (DDMQH2) to 2-polyprenyl-3-methyl-6-methoxy-1,4-benzoquinol (DMQH2). This is Ubiquinone/menaquinone biosynthesis C-methyltransferase UbiE from Pseudomonas syringae pv. tomato (strain ATCC BAA-871 / DC3000).